Consider the following 510-residue polypeptide: Histone deacetylase 3 (510 aa).

The segment at Arg24–Gly338 is histone deacetylase. Catalysis depends on His158, which acts as the Proton donor/acceptor. Zn(2+) is bound by residues Asp193, His195, and Asp281. Residues Pro394–Lys510 are disordered. Basic and acidic residues-rich tracts occupy residues Asp418–Pro434 and Val448–Pro472. Positions Ala485–Asn503 are enriched in low complexity.

Belongs to the histone deacetylase family. HD Type 1 subfamily. Requires Zn(2+) as cofactor. Expressed in roots.

The protein localises to the nucleus. The catalysed reaction is N(6)-acetyl-L-lysyl-[histone] + H2O = L-lysyl-[histone] + acetate. Responsible for the deacetylation of lysine residues on the N-terminal part of the core histones (H2A, H2B, H3 and H4). Histone deacetylation gives a tag for epigenetic repression and plays an important role in transcriptional regulation, cell cycle progression and developmental events. Histone deacetylases act via the formation of large multiprotein complexes. In Oryza sativa subsp. japonica (Rice), this protein is Histone deacetylase 3.